The sequence spans 885 residues: Conidiophore development regulator abaA (885 aa).

Over residues 1-20 the composition is skewed to polar residues; the sequence is MSSLFQPRPVLSSQRYSQSP. The interval 1–25 is disordered; sequence MSSLFQPRPVLSSQRYSQSPDYVDT. Residues 124-217 constitute a DNA-binding region (TEA); that stretch reads QKDKGGVWRR…QVVKKFFEDL (94 aa). Disordered regions lie at residues 502 to 539 and 817 to 885; these read KEKR…WTRR and APGS…TAGW. 2 stretches are compositionally biased toward basic and acidic residues: residues 508-521 and 831-840; these read YADG…ERAG and VESHAGDHHG.

This sequence belongs to the TEC1 family.

It localises to the nucleus. In terms of biological role, brlA, abaA and wetA are pivotal regulators of conidiophore development and conidium maturation. They act individually and together to regulate their own expression and that of numerous other sporulation-specific genes. BrlA, abaA and wetA act together to positively regulate the expression of the Pks1 gene cluster that mediates the biosynthesis of an anthraquinone derivative pigment that contributes to conidial pigmentation that provides protection from UV radiation, heat and cold stress. The chain is Conidiophore development regulator abaA from Metarhizium robertsii (strain ARSEF 23 / ATCC MYA-3075) (Metarhizium anisopliae (strain ARSEF 23)).